The chain runs to 440 residues: Chromosomal replication initiator protein DnaA (440 aa).

The interval 1–74 is domain I, interacts with DnaA modulators; the sequence is MNPSQILENL…VQSGNKAIIN (74 aa). The domain II stretch occupies residues 74 to 99; that stretch reads NIQAQSAKQSNKSTKIDIAHIKAQST. Residues 100-316 form a domain III, AAA+ region region; it reads ILNPSFTFES…GIIISLNAYA (217 aa). ATP is bound by residues Gly-146, Gly-148, Lys-149, and Thr-150. Positions 317-440 are domain IV, binds dsDNA; it reads TILGQEITLE…KNKILVKSQS (124 aa).

It belongs to the DnaA family. As to quaternary structure, oligomerizes as a right-handed, spiral filament on DNA at oriC.

It is found in the cytoplasm. In terms of biological role, plays an essential role in the initiation and regulation of chromosomal replication. ATP-DnaA binds to the origin of replication (oriC) to initiate formation of the DNA replication initiation complex once per cell cycle. Binds the DnaA box (a 9 base pair repeat at the origin) and separates the double-stranded (ds)DNA. Forms a right-handed helical filament on oriC DNA; dsDNA binds to the exterior of the filament while single-stranded (ss)DNA is stabiized in the filament's interior. The ATP-DnaA-oriC complex binds and stabilizes one strand of the AT-rich DNA unwinding element (DUE), permitting loading of DNA polymerase. After initiation quickly degrades to an ADP-DnaA complex that is not apt for DNA replication. Binds acidic phospholipids. The protein is Chromosomal replication initiator protein DnaA of Campylobacter jejuni subsp. jejuni serotype O:2 (strain ATCC 700819 / NCTC 11168).